The chain runs to 165 residues: Fatty acid-binding protein homolog 3 (165 aa).

Positions 1–19 (MNLYLTLFSFCFLAIMAEA) are cleaved as a signal peptide.

Belongs to the calycin superfamily. Fatty-acid binding protein (FABP) family. Expressed in presumptive hypodermal cells by the comma stage and in posterior body wall muscle cells by the two-fold stage. From L1 to adult stages, expression continues in body wall muscle cells adjacent to the pseudocoelom, while hypodermal expression is extinguished.

It localises to the secreted. In terms of biological role, may play a role in sequestering potentially toxic fatty acids and their peroxidation products, or it may be involved in the maintenance of the impermeable lipid layer of the eggshell. This Caenorhabditis elegans protein is Fatty acid-binding protein homolog 3 (lbp-3).